Consider the following 210-residue polypeptide: Fibroblast growth factor 21 (210 aa).

An N-terminal signal peptide occupies residues 1–28; that stretch reads MEWMRSRVGTLGLWVRLLLAVFLLGVYQ. Residues 144–210 form a disordered region; it reads PLRLPQKDSP…LQGRSPSYAS (67 aa).

Belongs to the heparin-binding growth factors family. In terms of assembly, interacts (via C-terminus) with KLB; this interaction is direct. Interacts with FGFR4. In terms of tissue distribution, most abundantly expressed in the liver, also expressed in the thymus at lower levels. Expressed in skeletal muscle (at protein level). Secreted in plasma (at protein level).

The protein localises to the secreted. In terms of biological role, stimulates glucose uptake in differentiated adipocytes via the induction of glucose transporter SLC2A1/GLUT1 expression (but not SLC2A4/GLUT4 expression). Activity probably requires the presence of KLB. Regulates systemic glucose homeostasis and insulin sensitivity. The sequence is that of Fibroblast growth factor 21 (Fgf21) from Mus musculus (Mouse).